The primary structure comprises 269 residues: Flagellar brake protein YcgR (269 aa).

A PilZ domain is found at 134-254; that stretch reads QRRNFYRVTT…SRLLIQRYIT (121 aa).

The protein belongs to the YcgR family. In terms of assembly, monomer. Interacts with the flagellar basal bodies.

The protein localises to the bacterial flagellum basal body. Acts as a flagellar brake, regulating swimming and swarming in a bis-(3'-5') cyclic diguanylic acid (c-di-GMP)-dependent manner. Binds 1 c-di-GMP dimer per subunit. Increasing levels of c-di-GMP lead to decreased motility. This chain is Flagellar brake protein YcgR, found in Nitrosomonas eutropha (strain DSM 101675 / C91 / Nm57).